A 234-amino-acid chain; its full sequence is Zein-alpha GZ19AB11 (234 aa).

Residues 1 to 21 form the signal peptide; it reads MAAKIFCLLMLLGLSASAATA.

It belongs to the zein family.

Functionally, zeins are major seed storage proteins. In Zea mays (Maize), this protein is Zein-alpha GZ19AB11.